A 584-amino-acid polypeptide reads, in one-letter code: Complement component C8 alpha chain (584 aa).

A signal peptide spans 1–20 (MFAVVFFILSLMTCQPGVTA). A propeptide spanning residues 21-30 (QEKVNQRVRR) is cleaved from the precursor. Residues 38-91 (TCQLSNWSEWTDCFPCQDKKYRHRSLLQPNKFGGTICSGDIWDQASCSSSTTCV) form the TSP type-1 1 domain. Intrachain disulfides connect C39-C74, C50-C84, C53-C90, C96-C108, C102-C121, C115-C130, and C140-C177. A C-linked (Man) tryptophan glycan is attached at W44. One can recognise an LDL-receptor class A domain in the interval 94–132 (AQCGQDFQCKETGRCLKRHLVCNGDQDCLDGSDEDDCED). Residues L113, N116, D118, D120, D126, and E127 each contribute to the Ca(2+) site. Residues 135–498 (AIDEDCSQYE…QYLMEFNACR (364 aa)) enclose the MACPF domain. 4 beta stranded membrane-spanning segments follow: residues 248–256 (FGVTIGIGP), 259–266 (SPLLVGVG), 377–384 (GGSLGIQY), and 390–395 (VGGGLS). C375 and C399 are oxidised to a cystine. A glycan (N-linked (GlcNAc...) asparagine) is linked at N437. Cystine bridges form between C497/C544, C499/C515, C502/C517, and C519/C528. An EGF-like domain is found at 499–529 (CGPCFNNGVPILEGTSCRCQCRLGSLGAACE). One can recognise a TSP type-1 2 domain in the interval 539–583 (DGSWSCWSSWSVCRAGIQERRRECDNPAPQNGGASCPGRKVQTQA). W542, W545, and W548 each carry a C-linked (Man) tryptophan glycan. Intrachain disulfides connect C551/C584 and C562/C574. The tract at residues 562–584 (CDNPAPQNGGASCPGRKVQTQAC) is disordered.

Belongs to the complement C6/C7/C8/C9 family. In terms of assembly, heterotrimer of 3 chains: alpha (C8A), beta (C8B) and gamma (C8G); the alpha and gamma chains are disulfide bonded. Component of the membrane attack complex (MAC), composed of complement C5b, C6, C7, C8A, C8B, C8G and multiple copies of the pore-forming subunit C9.

The protein resides in the secreted. It localises to the target cell membrane. Membrane attack complex (MAC) assembly is inhibited by CD59, thereby protecting self-cells from damage during complement activation. CD59 acts by binding to the beta-haipins of C8 (C8A and C8B), forming an intermolecular beta-sheet that prevents incorporation of the multiple copies of C9 required for complete formation of the osmolytic pore. MAC assembly is also inhibited by clusterin (CLU) chaperones that inhibit polymerization of C9. Component of the membrane attack complex (MAC), a multiprotein complex activated by the complement cascade, which inserts into a target cell membrane and forms a pore, leading to target cell membrane rupture and cell lysis. The MAC is initiated by proteolytic cleavage of C5 into complement C5b in response to the classical, alternative, lectin and GZMK complement pathways. The complement pathways consist in a cascade of proteins that leads to phagocytosis and breakdown of pathogens and signaling that strengthens the adaptive immune system. C8A, together with C8B and C8G, inserts into the target membrane, but does not form pores by itself. During MAC assembly, associates with C5b, C6 and C7 to form the C5b8 intermediate complex that inserts into the target membrane and traverses the bilayer increasing membrane rigidity. The protein is Complement component C8 alpha chain of Homo sapiens (Human).